We begin with the raw amino-acid sequence, 428 residues long: Probable methanogen homoaconitase large subunit (428 aa).

Positions 304, 364, and 367 each coordinate [4Fe-4S] cluster.

Belongs to the aconitase/IPM isomerase family. LeuC type 2 subfamily. In terms of assembly, heterotetramer of 2 HacA and 2 HacB proteins.

The enzyme catalyses (2R)-homocitrate = (2R,3S)-homoisocitrate. The catalysed reaction is (2R)-homocitrate = cis-homoaconitate + H2O. It carries out the reaction (2R,3S)-homoisocitrate = cis-homoaconitate + H2O. It catalyses the reaction cis-(homo)2aconitate + H2O = (2R,3S)-iso(homo)2citrate. The enzyme catalyses cis-(homo)3aconitate + H2O = (2R,3S)-iso(homo)3citrate. It functions in the pathway organic acid metabolism; 2-oxosuberate biosynthesis. Component of a hydro-lyase with broad substrate specificity for cis-unsaturated tricarboxylic acids. Catalyzes both the reversible dehydration of (R)-homocitrate ((R)-2-hydroxybutane-1,2,4-tricarboxylate) to produce cis-homoaconitate ((Z)-but-1-ene-1,2,4-tricarboxylate), and its hydration to homoisocitrate ((1R,2S)-1-hydroxybutane-1,2,4-tricarboxylate). Is also able to hydrate the analogous longer chain substrates cis-homo(2)-aconitate, cis-homo(3)-aconitate. These reactions are part of the biosynthesis pathway of coenzyme B. This is Probable methanogen homoaconitase large subunit (hacA) from Methanothermobacter thermautotrophicus (strain ATCC 29096 / DSM 1053 / JCM 10044 / NBRC 100330 / Delta H) (Methanobacterium thermoautotrophicum).